We begin with the raw amino-acid sequence, 252 residues long: Ribosomal RNA small subunit methyltransferase J (252 aa).

S-adenosyl-L-methionine is bound by residues 101–102, 117–118, 153–154, and D171; these read RD, ER, and SS.

Belongs to the methyltransferase superfamily. RsmJ family.

The protein resides in the cytoplasm. It carries out the reaction guanosine(1516) in 16S rRNA + S-adenosyl-L-methionine = N(2)-methylguanosine(1516) in 16S rRNA + S-adenosyl-L-homocysteine + H(+). In terms of biological role, specifically methylates the guanosine in position 1516 of 16S rRNA. This is Ribosomal RNA small subunit methyltransferase J from Pseudoalteromonas translucida (strain TAC 125).